Here is a 303-residue protein sequence, read N- to C-terminus: 2-dehydropantoate 2-reductase (303 aa).

NADP(+) contacts are provided by residues 7–12 (GPGSLG), K78, N103, and A129. The active-site Proton donor is K185. Substrate contacts are provided by residues K185, N189, N193, N203, and 252–255 (NESS). E267 provides a ligand contact to NADP(+).

The protein belongs to the ketopantoate reductase family.

It is found in the cytoplasm. It carries out the reaction (R)-pantoate + NAD(+) = 2-dehydropantoate + NADH + H(+). The enzyme catalyses (R)-pantoate + NADP(+) = 2-dehydropantoate + NADPH + H(+). The protein operates within cofactor biosynthesis; coenzyme A biosynthesis. Catalyzes the NAD(P)H-dependent reduction of ketopantoate into pantoic acid. The chain is 2-dehydropantoate 2-reductase from Halobacterium salinarum (strain ATCC 700922 / JCM 11081 / NRC-1) (Halobacterium halobium).